The sequence spans 236 residues: Large ribosomal subunit protein uL3 (236 aa).

A compositionally biased stretch (low complexity) spans 139–149; it reads SVSHRSHGSTG. Residues 139–165 form a disordered region; it reads SVSHRSHGSTGQRQDPGKVFKGKKMAG. At glutamine 152 the chain carries N5-methylglutamine.

This sequence belongs to the universal ribosomal protein uL3 family. Part of the 50S ribosomal subunit. Forms a cluster with proteins L14 and L19. Methylated by PrmB.

In terms of biological role, one of the primary rRNA binding proteins, it binds directly near the 3'-end of the 23S rRNA, where it nucleates assembly of the 50S subunit. The polypeptide is Large ribosomal subunit protein uL3 (Pelagibacter ubique (strain HTCC1062)).